Here is a 346-residue protein sequence, read N- to C-terminus: Phosphoribosylformylglycinamidine cyclo-ligase (346 aa).

Belongs to the AIR synthase family.

The protein localises to the cytoplasm. It carries out the reaction 2-formamido-N(1)-(5-O-phospho-beta-D-ribosyl)acetamidine + ATP = 5-amino-1-(5-phospho-beta-D-ribosyl)imidazole + ADP + phosphate + H(+). Its pathway is purine metabolism; IMP biosynthesis via de novo pathway; 5-amino-1-(5-phospho-D-ribosyl)imidazole from N(2)-formyl-N(1)-(5-phospho-D-ribosyl)glycinamide: step 2/2. The sequence is that of Phosphoribosylformylglycinamidine cyclo-ligase from Bacillus mycoides (strain KBAB4) (Bacillus weihenstephanensis).